The primary structure comprises 454 residues: Bifunctional protein GlmU (454 aa).

Residues 1–226 (MALNVVILAA…AIEVEGANNR (226 aa)) are pyrophosphorylase. Residues 8–11 (LAAG), Lys-22, Gln-73, 78–79 (GT), 100–102 (YGD), Gly-137, Glu-151, Asn-166, and Asn-224 each bind UDP-N-acetyl-alpha-D-glucosamine. Residue Asp-102 coordinates Mg(2+). Asn-224 provides a ligand contact to Mg(2+). The linker stretch occupies residues 227–247 (VQLAQLERAYQARAAEKLMLE). The interval 248–454 (GANLRDPARI…GWTRPVKQKK (207 aa)) is N-acetyltransferase. Residues Arg-330 and Lys-348 each coordinate UDP-N-acetyl-alpha-D-glucosamine. Residue His-360 is the Proton acceptor of the active site. Positions 363 and 374 each coordinate UDP-N-acetyl-alpha-D-glucosamine. Acetyl-CoA contacts are provided by residues Ala-377, 383–384 (NY), Ser-402, Ala-420, and Arg-437.

This sequence in the N-terminal section; belongs to the N-acetylglucosamine-1-phosphate uridyltransferase family. The protein in the C-terminal section; belongs to the transferase hexapeptide repeat family. As to quaternary structure, homotrimer. The cofactor is Mg(2+).

Its subcellular location is the cytoplasm. It catalyses the reaction alpha-D-glucosamine 1-phosphate + acetyl-CoA = N-acetyl-alpha-D-glucosamine 1-phosphate + CoA + H(+). The catalysed reaction is N-acetyl-alpha-D-glucosamine 1-phosphate + UTP + H(+) = UDP-N-acetyl-alpha-D-glucosamine + diphosphate. It functions in the pathway nucleotide-sugar biosynthesis; UDP-N-acetyl-alpha-D-glucosamine biosynthesis; N-acetyl-alpha-D-glucosamine 1-phosphate from alpha-D-glucosamine 6-phosphate (route II): step 2/2. It participates in nucleotide-sugar biosynthesis; UDP-N-acetyl-alpha-D-glucosamine biosynthesis; UDP-N-acetyl-alpha-D-glucosamine from N-acetyl-alpha-D-glucosamine 1-phosphate: step 1/1. The protein operates within bacterial outer membrane biogenesis; LPS lipid A biosynthesis. Functionally, catalyzes the last two sequential reactions in the de novo biosynthetic pathway for UDP-N-acetylglucosamine (UDP-GlcNAc). The C-terminal domain catalyzes the transfer of acetyl group from acetyl coenzyme A to glucosamine-1-phosphate (GlcN-1-P) to produce N-acetylglucosamine-1-phosphate (GlcNAc-1-P), which is converted into UDP-GlcNAc by the transfer of uridine 5-monophosphate (from uridine 5-triphosphate), a reaction catalyzed by the N-terminal domain. This chain is Bifunctional protein GlmU, found in Shewanella loihica (strain ATCC BAA-1088 / PV-4).